The sequence spans 377 residues: Homoserine O-succinyltransferase (377 aa).

One can recognise an AB hydrolase-1 domain in the interval 50-359 (NAVLVCHALS…SSHGHDSFLM (310 aa)). The active-site Nucleophile is the Ser-156. Arg-226 provides a ligand contact to substrate. Active-site residues include Asp-321 and His-354. Asp-355 is a substrate binding site.

This sequence belongs to the AB hydrolase superfamily. MetX family. In terms of assembly, homodimer.

The protein resides in the cytoplasm. It carries out the reaction L-homoserine + succinyl-CoA = O-succinyl-L-homoserine + CoA. It participates in amino-acid biosynthesis; L-methionine biosynthesis via de novo pathway; O-succinyl-L-homoserine from L-homoserine: step 1/1. Its function is as follows. Transfers a succinyl group from succinyl-CoA to L-homoserine, forming succinyl-L-homoserine. The polypeptide is Homoserine O-succinyltransferase (Nitrosospira multiformis (strain ATCC 25196 / NCIMB 11849 / C 71)).